The sequence spans 225 residues: Glucosyl-3-phosphoglycerate phosphatase (225 aa).

Substrate is bound at residue Arg10. The active-site Tele-phosphohistidine intermediate is the His11. Arg60 lines the substrate pocket. Catalysis depends on Glu84, which acts as the Proton donor/acceptor. His158 provides a ligand contact to substrate.

Belongs to the phosphoglycerate mutase family. As to quaternary structure, homodimer.

It catalyses the reaction (2R)-2-O-(alpha-D-glucopyranosyl)-3-phospho-glycerate + H2O = (2R)-2-O-(alpha-D-glucopyranosyl)-glycerate + phosphate. Involved in the biosynthesis of mycobacterial methylglucose lipopolysaccharides (MGLP). Catalyzes the dephosphorylation of glucosyl-3-phosphoglycerate (GPG) to glucosylglycerate. This Mycolicibacterium vanbaalenii (strain DSM 7251 / JCM 13017 / BCRC 16820 / KCTC 9966 / NRRL B-24157 / PYR-1) (Mycobacterium vanbaalenii) protein is Glucosyl-3-phosphoglycerate phosphatase.